A 280-amino-acid chain; its full sequence is MVVATMLGGMWVASRYLRAGLAGDAAIERAAVPPAQLALALLGTVLVVSGANALNMYIERDTDLLMERTRSRPLPARRLSPELALWFGIALSAASIPVLLVGVNATTGVLAAAALLSYVLVYTPLKRRTTLSLPIGAIPGAIPPLLGWTSVTGQIDAPGFLLFAVMFLWQIPHFLAISLFRQDEYQRAGLKVLPLEKGDLTTRRHIVGYLALLVLSSVLFVPLGVAGPVYLGAAILLGGAFFGLGVYGLRAGTGARWARQVFFASMVYLVLLFAALMIGA.

9 consecutive transmembrane segments (helical) span residues 2-21, 30-50, 83-103, 105-125, 131-151, 160-180, 206-226, 229-249, and 260-280; these read VVAT…RAGL, AAVP…VVSG, LALW…LVGV, ATTG…YTPL, LSLP…WTSV, FLLF…ISLF, IVGY…LGVA, VYLG…VYGL, and QVFF…MIGA.

The protein belongs to the UbiA prenyltransferase family. Protoheme IX farnesyltransferase subfamily.

It localises to the cell inner membrane. It catalyses the reaction heme b + (2E,6E)-farnesyl diphosphate + H2O = Fe(II)-heme o + diphosphate. Its pathway is porphyrin-containing compound metabolism; heme O biosynthesis; heme O from protoheme: step 1/1. Its function is as follows. Converts heme B (protoheme IX) to heme O by substitution of the vinyl group on carbon 2 of heme B porphyrin ring with a hydroxyethyl farnesyl side group. The chain is Protoheme IX farnesyltransferase from Sorangium cellulosum (strain So ce56) (Polyangium cellulosum (strain So ce56)).